Reading from the N-terminus, the 377-residue chain is Nitric oxide reductase FlRd-NAD(+) reductase (377 aa).

It belongs to the FAD-dependent oxidoreductase family. FAD serves as cofactor.

It localises to the cytoplasm. The catalysed reaction is 2 reduced [nitric oxide reductase rubredoxin domain] + NAD(+) + H(+) = 2 oxidized [nitric oxide reductase rubredoxin domain] + NADH. It participates in nitrogen metabolism; nitric oxide reduction. In terms of biological role, one of at least two accessory proteins for anaerobic nitric oxide (NO) reductase. Reduces the rubredoxin moiety of NO reductase. The polypeptide is Nitric oxide reductase FlRd-NAD(+) reductase (Citrobacter koseri (strain ATCC BAA-895 / CDC 4225-83 / SGSC4696)).